A 257-amino-acid polypeptide reads, in one-letter code: MSINDKPIGFFDSGVGGISVLKEAFKLLPKEDFLYYGDSKNAPYGTKKVEEVKALTFNATDFLMNKGIKALVVACNTATSVTINDLRENYDIPIIGIEPALKPAVELKKGGKIIIMATPMTLAEKKFANLMDLYKETEDIEPLPCPGLPELIEQGIVSGDVIYNYLKDKFSKYDNEKISSIVLGCTHYPFIEKTLKEVTYNKACIIDGSFGTSRELKRQLKNSNMLREENRVGKVTIFNSREDKDIIDLSYKLFNMK.

Substrate-binding positions include 12-13 (DS) and 44-45 (YG). Cys-75 serves as the catalytic Proton donor/acceptor. 76-77 (NT) serves as a coordination point for substrate. Cys-185 (proton donor/acceptor) is an active-site residue. 186–187 (TH) is a substrate binding site.

It belongs to the aspartate/glutamate racemases family.

It carries out the reaction L-glutamate = D-glutamate. It functions in the pathway cell wall biogenesis; peptidoglycan biosynthesis. Its function is as follows. Provides the (R)-glutamate required for cell wall biosynthesis. The chain is Glutamate racemase from Clostridium botulinum (strain Okra / Type B1).